Here is a 279-residue protein sequence, read N- to C-terminus: Urease accessory protein UreD (279 aa).

This sequence belongs to the UreD family. UreD, UreF and UreG form a complex that acts as a GTP-hydrolysis-dependent molecular chaperone, activating the urease apoprotein by helping to assemble the nickel containing metallocenter of UreC. The UreE protein probably delivers the nickel.

The protein localises to the cytoplasm. Required for maturation of urease via the functional incorporation of the urease nickel metallocenter. The protein is Urease accessory protein UreD of Nostoc punctiforme (strain ATCC 29133 / PCC 73102).